The primary structure comprises 361 residues: Probable purine permease 5 (361 aa).

Helical transmembrane passes span 37–57 (WILL…SSLL), 70–90 (WIIS…LLPT), 105–125 (LVLS…MYAY), 134–154 (TSSL…YLIV), 158–178 (LNAS…IIAL), 193–213 (YFAG…IFAL), 235–255 (VMVS…SNDF), 285–305 (LGVL…AGVL), and 315–335 (VAAV…SLVL). The EamA domain maps to 75-178 (VAVAGWPITC…ITGAMAIIAL (104 aa)).

It belongs to the purine permeases (TC 2.A.7.14) family.

The protein resides in the membrane. The protein is Probable purine permease 5 (PUP5) of Arabidopsis thaliana (Mouse-ear cress).